The sequence spans 1333 residues: ABC transporter ATP-binding protein/permease PDR18 (1333 aa).

The chain crosses the membrane as a helical span at residues 13 to 33; it reads FLEGQTFGDILCLPWTIIKGI. One can recognise an ABC transporter 1 domain in the interval 30–281; it reads IKGIRERKNR…FENMGYLCPP (252 aa). N-linked (GlcNAc...) asparagine glycans are attached at residues N48, N144, N205, and N350. The next 6 membrane-spanning stretches (helical) occupy residues 392–412, 425–445, 474–494, 499–519, 534–554, and 642–662; these read YTVI…SLFY, SGVL…NISF, FPFR…LAGL, GAFF…TSLF, SIAG…IQLP, and FGIM…FTEY. N697 and N733 each carry an N-linked (GlcNAc...) asparagine glycan. An ABC transporter 2 domain is found at 729–971; it reads FIWKNVSFTI…VIKYFEKNGA (243 aa). 765–772 is a binding site for ATP; sequence GESGAGKT. N958 carries N-linked (GlcNAc...) asparagine glycosylation. 6 helical membrane passes run 1071–1091, 1092–1112, 1150–1170, 1178–1198, 1210–1230, and 1235–1255; these read LLMI…VNAI, GLQN…PATN, PYHL…LGVF, VFYL…ALMI, VIVG…QPAS, and FWTF…LVGL. A glycan (N-linked (GlcNAc...) asparagine) is linked at N1320.

It belongs to the ABC transporter superfamily. ABCG family. PDR (TC 3.A.1.205) subfamily.

Its subcellular location is the membrane. The polypeptide is ABC transporter ATP-binding protein/permease PDR18 (PDR18) (Saccharomyces cerevisiae (strain ATCC 204508 / S288c) (Baker's yeast)).